The sequence spans 111 residues: MAQIQFSRGVSEPVVPEVRLTRAKSGNSGTATFRFESPTILDAESTDDITGMYLVDEEGEIVTREVKGKFINGKPTSVEAILIMNSQDEWDRFMRFMERYAQENGLGFSKA.

This sequence belongs to the Psb28 family. In terms of assembly, part of the photosystem II complex.

It localises to the cellular thylakoid membrane. This is Photosystem II reaction center Psb28 protein from Crocosphaera subtropica (strain ATCC 51142 / BH68) (Cyanothece sp. (strain ATCC 51142)).